The primary structure comprises 497 residues: Methionine--tRNA ligase (497 aa).

Residues 14–24 (YYVNDVPHLGH) carry the 'HIGH' region motif. Zn(2+)-binding residues include cysteine 129, cysteine 132, cysteine 147, and histidine 150. Positions 295–299 (KMSKT) match the 'KMSKS' region motif. Position 298 (lysine 298) interacts with ATP.

Belongs to the class-I aminoacyl-tRNA synthetase family. MetG type 2A subfamily. As to quaternary structure, monomer. The cofactor is Zn(2+).

It localises to the cytoplasm. It carries out the reaction tRNA(Met) + L-methionine + ATP = L-methionyl-tRNA(Met) + AMP + diphosphate. In terms of biological role, is required not only for elongation of protein synthesis but also for the initiation of all mRNA translation through initiator tRNA(fMet) aminoacylation. The sequence is that of Methionine--tRNA ligase (metG) from Aquifex aeolicus (strain VF5).